Reading from the N-terminus, the 167-residue chain is Epithelial membrane protein 2 (167 aa).

The helical transmembrane segment at 1–21 (MLVLLAFIIAFHITSAALLFI) threads the bilayer. Residues asparagine 44, asparagine 47, and asparagine 52 are each glycosylated (N-linked (GlcNAc...) asparagine). Helical transmembrane passes span 67–87 (TMILSTILCCIAFFIFVLQLF), 95–115 (FVLTSIIQLMSCLCVMIAASI), and 143–163 (YILAWVAFACTFISGMMYLIL).

It belongs to the PMP-22/EMP/MP20 family. Interacts with PTK2; regulates PTK2 activation and localization. Interacts with ITGB3; regulates the levels of the heterodimer ITGA5-ITGB3 integrin surface expression. Interacts with P2RX7 (via C-terminus). Interacts with ITGB1; the interaction may be direct or indirect and ITGB1 has a heterodimer form. In terms of tissue distribution, expressed in ciliary body epithelia, sclera, cornea, and retinal pigment epithelium (at protein level). Expressed in lung and endometrial tissue; expression is particularly abundant in secretory endometrium (at protein level). Expressed in placental villous syncytiotrophoblasts and cytotrophoblasts and on the membrane of interstitial trophoblasts (at protein level).

It localises to the golgi apparatus membrane. Its subcellular location is the cell membrane. The protein resides in the apical cell membrane. It is found in the membrane raft. The protein localises to the cytoplasm. It localises to the nucleus. Its subcellular location is the perinuclear region. Functionally, functions as a key regulator of cell membrane composition by regulating protein surface expression. Also, plays a role in regulation of processes including cell migration, cell proliferation, cell contraction and cell adhesion. Regulates transepithelial migration of neutrophils into the alveolar lumen, potentially via mediation of cell surface expression of adhesion markers and lipid raft formation. Negatively regulates caveolae formation by reducing CAV1 expression and CAV1 amount by increasing lysosomal degradation. Facilitates surface trafficking and formation of lipid rafts bearing GPI-anchor proteins. Regulates surface expression of MHC1 and ICAM1 proteins increasing susceptibility to T-cell mediated cytotoxicity. Regulates the plasma membrane expression of the integrin heterodimers ITGA6-ITGB1, ITGA5-ITGB3 and ITGA5-ITGB1 resulting in modulation of cell-matrix adhesion. Also regulates many processes through PTK2. Regulates blood vessel endothelial cell migration and angiogenesis by regulating VEGF protein expression through PTK2 activation. Regulates cell migration and cell contraction through PTK2 and SRC activation. Regulates focal adhesion density, F-actin conformation and cell adhesion capacity through interaction with PTK2. Positively regulates cell proliferation. Plays a role during cell death and cell blebbing. Promotes angiogenesis and vasculogenesis through induction of VEGFA via a HIF1A-dependent pathway. Also plays a role in embryo implantation by regulating surface trafficking of integrin heterodimer ITGA5-ITGB3. Plays a role in placental angiogenesis and uterine natural killer cell regulation at the maternal-fetal placental interface, however not required in the maternal tissues for a viable pregnancy. Involved in the early stages of embryogenic development and cardiogenesis, potentially via regulation of epithelial-mesenchymal transition timing. May play a role in glomerular filtration. The protein is Epithelial membrane protein 2 (EMP2) of Homo sapiens (Human).